Consider the following 398-residue polypeptide: Elongation factor Tu (398 aa).

Positions 10 to 207 constitute a tr-type G domain; the sequence is KPHVNIGTIG…TVDDYIPDPE (198 aa). A G1 region spans residues 19–26; the sequence is GHVDHGKT. 19–26 is a binding site for GTP; that stretch reads GHVDHGKT. Position 26 (Thr26) interacts with Mg(2+). The segment at 63 to 67 is G2; that stretch reads GITIN. The tract at residues 84 to 87 is G3; sequence DAPG. Residues 84-88 and 139-142 contribute to the GTP site; these read DAPGH and NKVD. The segment at 139–142 is G4; the sequence is NKVD. Residues 177 to 179 are G5; the sequence is SAL.

Belongs to the TRAFAC class translation factor GTPase superfamily. Classic translation factor GTPase family. EF-Tu/EF-1A subfamily. Monomer.

It is found in the cytoplasm. The catalysed reaction is GTP + H2O = GDP + phosphate + H(+). Its function is as follows. GTP hydrolase that promotes the GTP-dependent binding of aminoacyl-tRNA to the A-site of ribosomes during protein biosynthesis. The polypeptide is Elongation factor Tu (Streptococcus mutans serotype c (strain ATCC 700610 / UA159)).